The sequence spans 1141 residues: DNA-directed RNA polymerase subunit beta (1141 aa).

The segment at 1117-1141 is disordered; it reads GINISREEPPGQLDDTPDTFSRGGM.

It belongs to the RNA polymerase beta chain family. As to quaternary structure, the RNAP catalytic core consists of 2 alpha, 1 beta, 1 beta' and 1 omega subunit. When a sigma factor is associated with the core the holoenzyme is formed, which can initiate transcription.

The catalysed reaction is RNA(n) + a ribonucleoside 5'-triphosphate = RNA(n+1) + diphosphate. In terms of biological role, DNA-dependent RNA polymerase catalyzes the transcription of DNA into RNA using the four ribonucleoside triphosphates as substrates. This chain is DNA-directed RNA polymerase subunit beta, found in Rubrobacter xylanophilus (strain DSM 9941 / JCM 11954 / NBRC 16129 / PRD-1).